Consider the following 358-residue polypeptide: tRNA-specific 2-thiouridylase MnmA (358 aa).

ATP is bound by residues Ala-7–Ser-14 and Leu-33. Cys-101 functions as the Nucleophile in the catalytic mechanism. Cysteines 101 and 197 form a disulfide. Position 125 (Gly-125) interacts with ATP. An interaction with tRNA region spans residues Lys-147–Gln-149. Catalysis depends on Cys-197, which acts as the Cysteine persulfide intermediate.

The protein belongs to the MnmA/TRMU family.

The protein localises to the cytoplasm. It catalyses the reaction S-sulfanyl-L-cysteinyl-[protein] + uridine(34) in tRNA + AH2 + ATP = 2-thiouridine(34) in tRNA + L-cysteinyl-[protein] + A + AMP + diphosphate + H(+). In terms of biological role, catalyzes the 2-thiolation of uridine at the wobble position (U34) of tRNA, leading to the formation of s(2)U34. In Rickettsia typhi (strain ATCC VR-144 / Wilmington), this protein is tRNA-specific 2-thiouridylase MnmA.